The primary structure comprises 86 residues: Progonadoliberin-2 (86 aa).

The first 24 residues, 1–24 (MVHICRLLVLMGMLLCLSAQFASS), serve as a signal peptide directing secretion. Position 25 is a pyrrolidone carboxylic acid (Gln-25). Gly-34 is modified (glycine amide).

Belongs to the GnRH family.

It is found in the secreted. Its function is as follows. Stimulates the secretion of gonadotropins. This Rutilus rutilus (Roach) protein is Progonadoliberin-2 (gnrh2).